A 196-amino-acid polypeptide reads, in one-letter code: ATP-dependent Clp protease proteolytic subunit (196 aa).

Serine 96 serves as the catalytic Nucleophile. Histidine 121 is a catalytic residue.

Belongs to the peptidase S14 family. Fourteen ClpP subunits assemble into 2 heptameric rings which stack back to back to give a disk-like structure with a central cavity, resembling the structure of eukaryotic proteasomes.

The protein resides in the cytoplasm. It carries out the reaction Hydrolysis of proteins to small peptides in the presence of ATP and magnesium. alpha-casein is the usual test substrate. In the absence of ATP, only oligopeptides shorter than five residues are hydrolyzed (such as succinyl-Leu-Tyr-|-NHMec, and Leu-Tyr-Leu-|-Tyr-Trp, in which cleavage of the -Tyr-|-Leu- and -Tyr-|-Trp bonds also occurs).. Functionally, cleaves peptides in various proteins in a process that requires ATP hydrolysis. Has a chymotrypsin-like activity. Plays a major role in the degradation of misfolded proteins. The polypeptide is ATP-dependent Clp protease proteolytic subunit (Streptococcus pneumoniae (strain ATCC 700669 / Spain 23F-1)).